The chain runs to 197 residues: Small ribosomal subunit protein uS5 (197 aa).

The segment covering 1–17 has biased composition (basic and acidic residues); it reads MAERENRGRGRGRNREE. 2 disordered regions span residues 1 to 22 and 158 to 197; these read MAER…TPEF and NESS…SEEA. The S5 DRBM domain occupies 22-85; the sequence is FADRLVAINR…EQAKRQLIRV (64 aa). Basic and acidic residues predominate over residues 172-186; sequence KVADILPKRDDHPQI.

It belongs to the universal ribosomal protein uS5 family. As to quaternary structure, part of the 30S ribosomal subunit. Contacts proteins S4 and S8.

With S4 and S12 plays an important role in translational accuracy. Its function is as follows. Located at the back of the 30S subunit body where it stabilizes the conformation of the head with respect to the body. In Jannaschia sp. (strain CCS1), this protein is Small ribosomal subunit protein uS5.